The chain runs to 524 residues: MSLQLETNKRRTFAIISHPDAGKTTVTEKLLLYGGAIQMAGAVKSRKTDRSATSDWMKMEQERGISVASSVMQFPYKDVMINLLDTPGHEDFSEDTYRTLTAVDSALMVIDVAKGVEDRTIKLMEVCRLRDTPILTFINKLDREGKEPIELLDEVEDVLKINCAPMTWPIGMGKRFKGIYHLYNDTVRLFESADGLNASEGELIHGLDNPELDQKLGSLAEELRDEIELVRGASHEFELDAFLKGTMTPVFFGSAVNNFGLQELLDGFAKYAPAPEGREASTRFVKSDEGKLTGFIFKIQANMDPKHRDRVAFMRIVSGKYEKGMSLKHVRIGKDVKIAKAITFLANKRDQAEVAYPGDIIGLHNHGTIKIGDTFTQGEDLKFTGIPNFAPELFRRAQLKDPMKMKALQKGLTQLSEEGATQLFRPIINNDLILGAVGILQFEVVAQRLKDEYNVTCLFEPVNVSTARWVIGDKAEIDKFLAKVKENVAYDAAGELVYIAPTRVNLTLIEERWPELQFVATREH.

Residues asparagine 8–glutamate 276 enclose the tr-type G domain. GTP contacts are provided by residues serine 17 to threonine 24, aspartate 85 to histidine 89, and asparagine 139 to aspartate 142.

Belongs to the TRAFAC class translation factor GTPase superfamily. Classic translation factor GTPase family. PrfC subfamily.

Its subcellular location is the cytoplasm. Its function is as follows. Increases the formation of ribosomal termination complexes and stimulates activities of RF-1 and RF-2. It binds guanine nucleotides and has strong preference for UGA stop codons. It may interact directly with the ribosome. The stimulation of RF-1 and RF-2 is significantly reduced by GTP and GDP, but not by GMP. This Hydrogenovibrio crunogenus (strain DSM 25203 / XCL-2) (Thiomicrospira crunogena) protein is Peptide chain release factor 3.